The chain runs to 86 residues: Small ribosomal subunit protein uS15 (86 aa).

It belongs to the universal ribosomal protein uS15 family. As to quaternary structure, part of the 30S ribosomal subunit. Forms a bridge to the 50S subunit in the 70S ribosome, contacting the 23S rRNA.

Functionally, one of the primary rRNA binding proteins, it binds directly to 16S rRNA where it helps nucleate assembly of the platform of the 30S subunit by binding and bridging several RNA helices of the 16S rRNA. Its function is as follows. Forms an intersubunit bridge (bridge B4) with the 23S rRNA of the 50S subunit in the ribosome. This chain is Small ribosomal subunit protein uS15, found in Endomicrobium trichonymphae.